A 124-amino-acid polypeptide reads, in one-letter code: Small ribosomal subunit protein eS25 (124 aa).

The segment covering 1 to 22 has biased composition (basic and acidic residues); it reads MPPKDSKQKKDTSKAKKDKDPV. Positions 1 to 37 are disordered; sequence MPPKDSKQKKDTSKAKKDKDPVNKSGGKAKKKKWSKG. Residues 27-37 show a composition bias toward basic residues; the sequence is GKAKKKKWSKG.

Belongs to the eukaryotic ribosomal protein eS25 family. Component of the small ribosomal subunit.

The protein localises to the cytoplasm. Its function is as follows. Component of the small ribosomal subunit. The ribosome is a large ribonucleoprotein complex responsible for the synthesis of proteins in the cell. This Ictalurus punctatus (Channel catfish) protein is Small ribosomal subunit protein eS25 (rps25).